The chain runs to 129 residues: MGRRILNDALRTIVNAEKRGKASVELKPVSTVMSSFLKIMKEKGYIKNFQVHDPHRVGRITVDLQGRVNDCKALTYRQDVKANEIGQYTERTLPTRQWGYIVITTPDGILDHEEAIKRNVGGQVLGFFH.

Belongs to the universal ribosomal protein uS8 family. In terms of assembly, component of the mitochondrial ribosome small subunit.

It is found in the mitochondrion. This Arabidopsis thaliana (Mouse-ear cress) protein is Small ribosomal subunit protein uS8mz (RPS15AB).